We begin with the raw amino-acid sequence, 338 residues long: Adenylosuccinate synthetase (338 aa).

Residues 12–18 (GDEGKGK) and 42–44 (GHT) each bind GTP. The active-site Proton acceptor is the aspartate 13. 2 residues coordinate Mg(2+): aspartate 13 and glycine 42. IMP contacts are provided by residues 13-16 (DEGK), 40-43 (NAGH), threonine 127, arginine 141, glutamine 179, threonine 194, and arginine 256. The active-site Proton donor is the histidine 43. Substrate is bound at residue 252 to 258 (TVTGRRR). GTP is bound by residues arginine 258, 284–286 (CLD), and 324–326 (STG).

The protein belongs to the adenylosuccinate synthetase family. Homodimer. It depends on Mg(2+) as a cofactor.

It is found in the cytoplasm. The enzyme catalyses IMP + L-aspartate + GTP = N(6)-(1,2-dicarboxyethyl)-AMP + GDP + phosphate + 2 H(+). Its pathway is purine metabolism; AMP biosynthesis via de novo pathway; AMP from IMP: step 1/2. Its function is as follows. Plays an important role in the de novo pathway of purine nucleotide biosynthesis. Catalyzes the first committed step in the biosynthesis of AMP from IMP. The polypeptide is Adenylosuccinate synthetase (Methanococcus maripaludis (strain DSM 14266 / JCM 13030 / NBRC 101832 / S2 / LL)).